A 290-amino-acid chain; its full sequence is 4-hydroxy-tetrahydrodipicolinate synthase (290 aa).

Thr-44 serves as a coordination point for pyruvate. The Proton donor/acceptor role is filled by Tyr-132. The Schiff-base intermediate with substrate role is filled by Lys-160. Ile-202 contacts pyruvate.

This sequence belongs to the DapA family. As to quaternary structure, homotetramer; dimer of dimers.

The protein localises to the cytoplasm. The catalysed reaction is L-aspartate 4-semialdehyde + pyruvate = (2S,4S)-4-hydroxy-2,3,4,5-tetrahydrodipicolinate + H2O + H(+). It participates in amino-acid biosynthesis; L-lysine biosynthesis via DAP pathway; (S)-tetrahydrodipicolinate from L-aspartate: step 3/4. In terms of biological role, catalyzes the condensation of (S)-aspartate-beta-semialdehyde [(S)-ASA] and pyruvate to 4-hydroxy-tetrahydrodipicolinate (HTPA). This is 4-hydroxy-tetrahydrodipicolinate synthase from Trichlorobacter lovleyi (strain ATCC BAA-1151 / DSM 17278 / SZ) (Geobacter lovleyi).